The following is a 300-amino-acid chain: Sodium/potassium/calcium exchanger 1 (300 aa).

A disordered region spans residues Asp1–Trp251. Composition is skewed to acidic residues over residues Gly92–Glu102, Gly109–Glu119, Gly126–Glu136, Gly158–Glu175, and Gly215–Glu244. A helical transmembrane segment spans residues Ala259 to Val275.

The protein belongs to the Ca(2+):cation antiporter (CaCA) (TC 2.A.19) family. SLC24A subfamily. In terms of processing, the uncleaved signal sequence is required for efficient membrane targeting and proper membrane integration and topology.

It is found in the cell membrane. It carries out the reaction Ca(2+)(out) + K(+)(out) + 4 Na(+)(in) = Ca(2+)(in) + K(+)(in) + 4 Na(+)(out). In terms of biological role, calcium, potassium:sodium antiporter that transports 1 Ca(2+) and 1 K(+) in exchange for 4 Na(+). Critical component of the visual transduction cascade, controlling the calcium concentration of outer segments during light and darkness. Light causes a rapid lowering of cytosolic free calcium in the outer segment of both retinal rod and cone photoreceptors and the light-induced lowering of calcium is caused by extrusion via this protein which plays a key role in the process of light adaptation. The protein is Sodium/potassium/calcium exchanger 1 (SLC24A1) of Bison bison (American bison).